Here is a 243-residue protein sequence, read N- to C-terminus: Ribosomal RNA small subunit methyltransferase J (243 aa).

S-adenosyl-L-methionine contacts are provided by residues 112-113 (ER) and Asp-164.

It belongs to the methyltransferase superfamily. RsmJ family.

It localises to the cytoplasm. The enzyme catalyses guanosine(1516) in 16S rRNA + S-adenosyl-L-methionine = N(2)-methylguanosine(1516) in 16S rRNA + S-adenosyl-L-homocysteine + H(+). Functionally, specifically methylates the guanosine in position 1516 of 16S rRNA. The polypeptide is Ribosomal RNA small subunit methyltransferase J (Legionella pneumophila (strain Paris)).